Reading from the N-terminus, the 197-residue chain is Imidazoleglycerol-phosphate dehydratase (197 aa).

This sequence belongs to the imidazoleglycerol-phosphate dehydratase family.

The protein resides in the cytoplasm. It catalyses the reaction D-erythro-1-(imidazol-4-yl)glycerol 3-phosphate = 3-(imidazol-4-yl)-2-oxopropyl phosphate + H2O. It functions in the pathway amino-acid biosynthesis; L-histidine biosynthesis; L-histidine from 5-phospho-alpha-D-ribose 1-diphosphate: step 6/9. The chain is Imidazoleglycerol-phosphate dehydratase from Bradyrhizobium sp. (strain ORS 278).